Reading from the N-terminus, the 321-residue chain is Transaldolase (321 aa).

Catalysis depends on lysine 132, which acts as the Schiff-base intermediate with substrate.

It belongs to the transaldolase family. Type 1 subfamily. Homodimer.

It localises to the cytoplasm. The catalysed reaction is D-sedoheptulose 7-phosphate + D-glyceraldehyde 3-phosphate = D-erythrose 4-phosphate + beta-D-fructose 6-phosphate. It participates in carbohydrate degradation; pentose phosphate pathway; D-glyceraldehyde 3-phosphate and beta-D-fructose 6-phosphate from D-ribose 5-phosphate and D-xylulose 5-phosphate (non-oxidative stage): step 2/3. Transaldolase is important for the balance of metabolites in the pentose-phosphate pathway. This chain is Transaldolase, found in Rhizobium leguminosarum bv. trifolii (strain WSM2304).